Reading from the N-terminus, the 122-residue chain is Large ribosomal subunit protein uL14c (122 aa).

Belongs to the universal ribosomal protein uL14 family. As to quaternary structure, part of the 50S ribosomal subunit.

The protein localises to the plastid. The protein resides in the chloroplast. Binds to 23S rRNA. The protein is Large ribosomal subunit protein uL14c of Lemna minor (Common duckweed).